A 308-amino-acid chain; its full sequence is Ribosomal RNA small subunit methyltransferase H (308 aa).

Residues glycine 34–histidine 36, aspartate 54, phenylalanine 80, aspartate 101, and glutamine 108 contribute to the S-adenosyl-L-methionine site.

Belongs to the methyltransferase superfamily. RsmH family.

Its subcellular location is the cytoplasm. The enzyme catalyses cytidine(1402) in 16S rRNA + S-adenosyl-L-methionine = N(4)-methylcytidine(1402) in 16S rRNA + S-adenosyl-L-homocysteine + H(+). In terms of biological role, specifically methylates the N4 position of cytidine in position 1402 (C1402) of 16S rRNA. In Ureaplasma parvum serovar 3 (strain ATCC 27815 / 27 / NCTC 11736), this protein is Ribosomal RNA small subunit methyltransferase H.